We begin with the raw amino-acid sequence, 244 residues long: Probable transcriptional regulatory protein DR_2548 (244 aa).

The disordered stretch occupies residues 1–23; it reads MAGHSKWAQIKRKKGANDKKRSA.

It belongs to the TACO1 family.

The protein localises to the cytoplasm. This is Probable transcriptional regulatory protein DR_2548 from Deinococcus radiodurans (strain ATCC 13939 / DSM 20539 / JCM 16871 / CCUG 27074 / LMG 4051 / NBRC 15346 / NCIMB 9279 / VKM B-1422 / R1).